The chain runs to 93 residues: Guanine nucleotide-binding protein subunit gamma (93 aa).

Residues 1–22 (MPQYASRDVGDPSQIKKNKQSM) form a disordered region. Residue C89 is the site of S-palmitoyl cysteine attachment. The residue at position 90 (C90) is a Cysteine methyl ester. A lipid anchor (S-farnesyl cysteine) is attached at C90. Positions 91-93 (VVM) are cleaved as a propeptide — removed in mature form.

Belongs to the G protein gamma family. As to quaternary structure, g proteins are composed of 3 units, alpha, beta and gamma.

The protein resides in the membrane. The chain is Guanine nucleotide-binding protein subunit gamma (gng-1) from Neurospora crassa (strain ATCC 24698 / 74-OR23-1A / CBS 708.71 / DSM 1257 / FGSC 987).